Reading from the N-terminus, the 188-residue chain is GMP synthase [glutamine-hydrolyzing] subunit A (188 aa).

The Glutamine amidotransferase type-1 domain maps to 1–188 (MIVIMDNGGQ…RNFAKLCGEL (188 aa)). The active-site Nucleophile is C78. Catalysis depends on residues H165 and E167.

Heterodimer composed of a glutamine amidotransferase subunit (A) and a GMP-binding subunit (B).

The catalysed reaction is XMP + L-glutamine + ATP + H2O = GMP + L-glutamate + AMP + diphosphate + 2 H(+). The protein operates within purine metabolism; GMP biosynthesis; GMP from XMP (L-Gln route): step 1/1. Catalyzes the synthesis of GMP from XMP. This chain is GMP synthase [glutamine-hydrolyzing] subunit A, found in Pyrococcus abyssi (strain GE5 / Orsay).